Reading from the N-terminus, the 262-residue chain is Small ribosomal subunit protein eS4x (262 aa).

One can recognise an S4 RNA-binding domain in the interval 42 to 104 (LPLVLIIRNR…TNENFRLLYD (63 aa)).

This sequence belongs to the eukaryotic ribosomal protein eS4 family.

The protein localises to the cytoplasm. This chain is Small ribosomal subunit protein eS4x (RPS4D), found in Arabidopsis thaliana (Mouse-ear cress).